We begin with the raw amino-acid sequence, 191 residues long: uncharacterized protein (191 aa).

Positions 1 to 22 (MKSLRLMLCAMPLMLTGCSTMS) are cleaved as a signal peptide.

This is an uncharacterized protein from Escherichia coli (strain K12).